We begin with the raw amino-acid sequence, 86 residues long: Large ribosomal subunit protein bL27c (86 aa).

The tract at residues 1–20 (MAHKKGSGSTRNGRDSNAQR) is disordered. Residues 7 to 19 (SGSTRNGRDSNAQ) show a composition bias toward polar residues.

It belongs to the bacterial ribosomal protein bL27 family.

It is found in the plastid. The protein resides in the chloroplast. The sequence is that of Large ribosomal subunit protein bL27c (rpl27) from Guillardia theta (Cryptophyte).